A 288-amino-acid chain; its full sequence is Acetyl-coenzyme A carboxylase carboxyl transferase subunit beta (288 aa).

The CoA carboxyltransferase N-terminal domain occupies 32 to 288 (LFAKCPACKH…LELHTEVENV (257 aa)). Residues C36, C39, C54, and C57 each coordinate Zn(2+). The segment at 36–57 (CPACKHTIYQKDLGKNKVCPNC) adopts a C4-type zinc-finger fold.

The protein belongs to the AccD/PCCB family. In terms of assembly, acetyl-CoA carboxylase is a heterohexamer composed of biotin carboxyl carrier protein (AccB), biotin carboxylase (AccC) and two subunits each of ACCase subunit alpha (AccA) and ACCase subunit beta (AccD). Requires Zn(2+) as cofactor.

The protein resides in the cytoplasm. It catalyses the reaction N(6)-carboxybiotinyl-L-lysyl-[protein] + acetyl-CoA = N(6)-biotinyl-L-lysyl-[protein] + malonyl-CoA. It functions in the pathway lipid metabolism; malonyl-CoA biosynthesis; malonyl-CoA from acetyl-CoA: step 1/1. Functionally, component of the acetyl coenzyme A carboxylase (ACC) complex. Biotin carboxylase (BC) catalyzes the carboxylation of biotin on its carrier protein (BCCP) and then the CO(2) group is transferred by the transcarboxylase to acetyl-CoA to form malonyl-CoA. This is Acetyl-coenzyme A carboxylase carboxyl transferase subunit beta from Lactococcus lactis subsp. cremoris (strain MG1363).